A 667-amino-acid polypeptide reads, in one-letter code: Ribosomal oxygenase 1 (667 aa).

Residue M1 is modified to N-acetylmethionine. Positions M1–L11 are enriched in low complexity. A disordered region spans residues M1 to L99. 2 stretches are compositionally biased toward basic residues: residues R12–Q22 and R35–R44. 3 positions are modified to phosphoserine: S61, S64, and S108. The JmjC domain maps to C322 to A467. The Fe cation site is built by H368, D370, and H433.

The protein belongs to the ROX family. NO66 subfamily. Interacts with SP7/OSX; the interaction is direct. Interacts with MYC. Interacts with PHF19; leading to its recruitment to H3K36me3 sites. Fe(2+) serves as cofactor.

It localises to the nucleus. Its subcellular location is the nucleolus. The protein localises to the nucleoplasm. The enzyme catalyses N(6),N(6)-dimethyl-L-lysyl(36)-[histone H3] + 2 2-oxoglutarate + 2 O2 = L-lysyl(36)-[histone H3] + 2 formaldehyde + 2 succinate + 2 CO2. The catalysed reaction is N(6)-methyl-L-lysyl-[protein] + 2-oxoglutarate + O2 = L-lysyl-[protein] + formaldehyde + succinate + CO2. It carries out the reaction L-histidyl-[protein] + 2-oxoglutarate + O2 = (3S)-3-hydroxy-L-histidyl-[protein] + succinate + CO2. Oxygenase that can act as both a histone lysine demethylase and a ribosomal histidine hydroxylase. Specifically demethylates 'Lys-4' (H3K4me) and 'Lys-36' (H3K36me) of histone H3, thereby playing a central role in histone code. Preferentially demethylates trimethylated H3 'Lys-4' (H3K4me3) and monomethylated H3 'Lys-4' (H3K4me1) residues, while it has weaker activity for dimethylated H3 'Lys-36' (H3K36me2). Acts as a regulator of osteoblast differentiation via its interaction with SP7/OSX by demethylating H3K4me and H3K36me, thereby inhibiting SP7/OSX-mediated promoter activation. Also catalyzes demethylation of non-histone proteins, such as CGAS: demethylation of monomethylated CGAS promotes interaction between CGAS and PARP1, followed by PARP1 inactivation. Also catalyzes the hydroxylation of 60S ribosomal protein L8 on 'His-216', thereby playing a role in ribosome biogenesis. Participates in MYC-induced transcriptional activation. The protein is Ribosomal oxygenase 1 (RIOX1) of Bos taurus (Bovine).